The sequence spans 142 residues: Large ribosomal subunit protein uL22 (142 aa).

The disordered stretch occupies residues 122–142 (RAEAPEETKPSRGTNKEQKAA).

This sequence belongs to the universal ribosomal protein uL22 family. Part of the 50S ribosomal subunit.

Functionally, this protein binds specifically to 23S rRNA; its binding is stimulated by other ribosomal proteins, e.g. L4, L17, and L20. It is important during the early stages of 50S assembly. It makes multiple contacts with different domains of the 23S rRNA in the assembled 50S subunit and ribosome. The globular domain of the protein is located near the polypeptide exit tunnel on the outside of the subunit, while an extended beta-hairpin is found that lines the wall of the exit tunnel in the center of the 70S ribosome. The protein is Large ribosomal subunit protein uL22 of Gluconobacter oxydans (strain 621H) (Gluconobacter suboxydans).